The following is a 303-amino-acid chain: Light-independent protochlorophyllide reductase iron-sulfur ATP-binding protein (303 aa).

The disordered stretch occupies residues 1-24 (MSSVLERPAAPAILPSRQDGEGSV). ATP is bound by residues 47–52 (GIGKST) and K76. Residue S51 coordinates Mg(2+). Residues C132 and C166 each contribute to the [4Fe-4S] cluster site. Residues 217 to 218 (NR) and 241 to 243 (PDL) contribute to the ATP site.

Belongs to the NifH/BchL/ChlL family. Homodimer. Protochlorophyllide reductase is composed of three subunits; BchL, BchN and BchB. The cofactor is [4Fe-4S] cluster.

It catalyses the reaction chlorophyllide a + oxidized 2[4Fe-4S]-[ferredoxin] + 2 ADP + 2 phosphate = protochlorophyllide a + reduced 2[4Fe-4S]-[ferredoxin] + 2 ATP + 2 H2O. Its pathway is porphyrin-containing compound metabolism; bacteriochlorophyll biosynthesis (light-independent). Its function is as follows. Component of the dark-operative protochlorophyllide reductase (DPOR) that uses Mg-ATP and reduced ferredoxin to reduce ring D of protochlorophyllide (Pchlide) to form chlorophyllide a (Chlide). This reaction is light-independent. The L component serves as a unique electron donor to the NB-component of the complex, and binds Mg-ATP. In Rhodospirillum centenum (strain ATCC 51521 / SW), this protein is Light-independent protochlorophyllide reductase iron-sulfur ATP-binding protein.